The chain runs to 246 residues: tRNA pseudouridine synthase A (246 aa).

Aspartate 52 acts as the Nucleophile in catalysis. Tyrosine 111 serves as a coordination point for substrate.

The protein belongs to the tRNA pseudouridine synthase TruA family. Homodimer.

The catalysed reaction is uridine(38/39/40) in tRNA = pseudouridine(38/39/40) in tRNA. Its function is as follows. Formation of pseudouridine at positions 38, 39 and 40 in the anticodon stem and loop of transfer RNAs. The polypeptide is tRNA pseudouridine synthase A (Borrelia garinii subsp. bavariensis (strain ATCC BAA-2496 / DSM 23469 / PBi) (Borreliella bavariensis)).